The sequence spans 501 residues: UDP-N-acetylmuramoyl-L-alanyl-D-glutamate--2,6-diaminopimelate ligase (501 aa).

Residues Leu26, Ser28, and 43 to 45 contribute to the UDP-N-acetyl-alpha-D-muramoyl-L-alanyl-D-glutamate site; that span reads HQC. Residue 123–129 participates in ATP binding; it reads GTNGKTT. UDP-N-acetyl-alpha-D-muramoyl-L-alanyl-D-glutamate is bound by residues Asn164, 165–166, Ser192, Gln198, and Arg200; that span reads TT. Residue Lys232 is modified to N6-carboxylysine. Residues Arg398, 422–425, Gly473, and Glu477 each bind meso-2,6-diaminopimelate; that span reads DNPR. The Meso-diaminopimelate recognition motif motif lies at 422–425; the sequence is DNPR.

Belongs to the MurCDEF family. MurE subfamily. Mg(2+) is required as a cofactor. In terms of processing, carboxylation is probably crucial for Mg(2+) binding and, consequently, for the gamma-phosphate positioning of ATP.

It is found in the cytoplasm. The catalysed reaction is UDP-N-acetyl-alpha-D-muramoyl-L-alanyl-D-glutamate + meso-2,6-diaminopimelate + ATP = UDP-N-acetyl-alpha-D-muramoyl-L-alanyl-gamma-D-glutamyl-meso-2,6-diaminopimelate + ADP + phosphate + H(+). It functions in the pathway cell wall biogenesis; peptidoglycan biosynthesis. Functionally, catalyzes the addition of meso-diaminopimelic acid to the nucleotide precursor UDP-N-acetylmuramoyl-L-alanyl-D-glutamate (UMAG) in the biosynthesis of bacterial cell-wall peptidoglycan. This chain is UDP-N-acetylmuramoyl-L-alanyl-D-glutamate--2,6-diaminopimelate ligase, found in Haemophilus ducreyi (strain 35000HP / ATCC 700724).